The sequence spans 398 residues: Putative molybdopterin biosynthesis protein MJ0666 (398 aa).

The protein belongs to the MoeA family.

The protein operates within cofactor biosynthesis; molybdopterin biosynthesis. In Methanocaldococcus jannaschii (strain ATCC 43067 / DSM 2661 / JAL-1 / JCM 10045 / NBRC 100440) (Methanococcus jannaschii), this protein is Putative molybdopterin biosynthesis protein MJ0666.